An 86-amino-acid chain; its full sequence is Small ribosomal subunit protein bS20 (86 aa).

The interval 1-22 is disordered; it reads MANIASARKRARQAEKNRQHNM.

Belongs to the bacterial ribosomal protein bS20 family.

Functionally, binds directly to 16S ribosomal RNA. The sequence is that of Small ribosomal subunit protein bS20 from Thioalkalivibrio sulfidiphilus (strain HL-EbGR7).